A 187-amino-acid polypeptide reads, in one-letter code: Chlorobenzene dioxygenase subunit beta (187 aa).

Belongs to the bacterial ring-hydroxylating dioxygenase beta subunit family. In terms of assembly, this dioxygenase system consists of four proteins: the two subunits of the oxygenase component (TecA1 and TecA2), a ferredoxin (TecA3) and a ferredoxin reductase (TecA4).

The enzyme catalyses chlorobenzene + NADH + O2 + H(+) = (1R,2R)-3-chlorocyclohexa-3,5-diene-1,2-diol + NAD(+). It participates in aromatic compound metabolism. Its function is as follows. Part of the oxygenase component of the chlorobenzene dioxygenase system that catalyzes the dihydroxylation of a range of aromatic compounds, including chlorinated benzenes and toluenes, and dinuclear aromatics such as biphenyl and dibenzo-p-dioxin. The beta subunit is not directly involved in the control of substrate specificity. The polypeptide is Chlorobenzene dioxygenase subunit beta (Cupriavidus sp. (strain PS12)).